The chain runs to 445 residues: MGITVLKNEGLDFHARISTPLSEIDDDIQKELLDLTKKVKIAGFRAGKVPVSIVKKKYGTSVRNDIIERRINHSVNHVIKEHNLNIIGRPKIEELQNESDKALEFTVKIELLPKITIPDLKKISLDRPKLEVNSKDVEEQLEKLAALTKNYTKESKAKIKDGDQVTIDAIGYIKEKAFEDGKLNDFKVIIGSNALIPGFEKQLIGSKTGSEVDVNVTFPENYHAKDLAGKDARFVVQIKAVHTAEPTVIDDEFAKKFQSNSLEELRTHFTKQIENESEEAINTIMKMNLFDKLEKLLDFDVPESLLEQEKNILKSGTDKNEQDESLLKDKSSKEITAYYNKLALRRVRIGLLLAEYAKSKNLQLEPDDLRKVIMQQARNFPGQENMIFDFYKNNPRAIEGLKGPALEDKAVQYIFNHEIKLKEKKYTKEELEKYLEAEEQRITLV.

The PPIase FKBP-type domain maps to 162-247 (GDQVTIDAIG…IKAVHTAEPT (86 aa)).

Belongs to the FKBP-type PPIase family. Tig subfamily.

It is found in the cytoplasm. It catalyses the reaction [protein]-peptidylproline (omega=180) = [protein]-peptidylproline (omega=0). Functionally, involved in protein export. Acts as a chaperone by maintaining the newly synthesized protein in an open conformation. Functions as a peptidyl-prolyl cis-trans isomerase. This is Trigger factor from Rickettsia peacockii (strain Rustic).